Consider the following 464-residue polypeptide: MAATRIEKDSMGPIEVPADQLWGAQTQRSLEHFRISQEKMPVALIHALALTKQAAASVNMDLGLLPQERGEAIIAAAKEVLEGKHPTEFPLAIWQTGSGTQSNMNMNEVLANRGSEILGGVRGSERLIHPNDDVNKSQSSNDVFPTAMHVAAVIALSEHLIPELKILQKTLADKAEAYKDIVKIGRTHLQDATPLTLGQEISGWAAMLTHNLKHIEDSIPHVCELALGGTAVGTGLNTHPEYAVRVAKKLAELTNHSFVTAPNKFEALATCDALVHSHGALKGLAASIMKIANDVRWLASGPRCGIGEISIPENEPGSSIMPGKVNPTQCEAVTMLCAQVMGNDVAINIGGASGNFELNVFRPMVINNFLQSVRLLADGMRSFNEHCAVGIEPNRDRITQLLNESLMLVTALNTHIGYDKAAEIAKKAHKEGLTLKQSAMKLGYLTEAEFDEWVRPEDMVGSLK.

Substrate contacts are provided by residues 98–100 (SGT), R126, 129–132 (HPND), 139–141 (SSN), and T187. The active-site Proton donor/acceptor is the H188. Residue S318 is part of the active site. Substrate is bound by residues S319 and 324-326 (KVN).

The protein belongs to the class-II fumarase/aspartase family. Fumarase subfamily. As to quaternary structure, homotetramer.

It is found in the cytoplasm. The catalysed reaction is (S)-malate = fumarate + H2O. Its pathway is carbohydrate metabolism; tricarboxylic acid cycle; (S)-malate from fumarate: step 1/1. Its function is as follows. Involved in the TCA cycle. Catalyzes the stereospecific interconversion of fumarate to L-malate. The chain is Fumarate hydratase class II from Photorhabdus laumondii subsp. laumondii (strain DSM 15139 / CIP 105565 / TT01) (Photorhabdus luminescens subsp. laumondii).